The following is a 319-amino-acid chain: MIALRAPTPLIDRLPAVRGRLSADVALAPVTWFRVGGPAEAMFKPADAQDLADFLAGRPRDVAVRVIGVASNLLVRDGGVPGVVIRLGRAFTGVEVVGETLVCGASALDATVAKVAEAAGLAGLEFLSGIPGTLGGALRMNAGAHLREMADIVVLATAVDGLGQSHTLTPAQMGFSYRACALPEDWIFTGCVLAGRPDERGAIAARMEALRQAREASQPLRARTGGSTFANPDPDLSGGRRAWELIDAAGCRGLRLGGAQVSEKHCNFLINTGEATAADLEALGETVRRRVMDTSGVALRWEIKRIGIGLDGLSAGENG.

Residues Val-35–Asp-198 enclose the FAD-binding PCMH-type domain. The active site involves Arg-178. Residue Ser-227 is the Proton donor of the active site. The active site involves Glu-302.

It belongs to the MurB family. Requires FAD as cofactor.

It is found in the cytoplasm. It carries out the reaction UDP-N-acetyl-alpha-D-muramate + NADP(+) = UDP-N-acetyl-3-O-(1-carboxyvinyl)-alpha-D-glucosamine + NADPH + H(+). Its pathway is cell wall biogenesis; peptidoglycan biosynthesis. Its function is as follows. Cell wall formation. The sequence is that of UDP-N-acetylenolpyruvoylglucosamine reductase from Rhodospirillum rubrum (strain ATCC 11170 / ATH 1.1.1 / DSM 467 / LMG 4362 / NCIMB 8255 / S1).